A 137-amino-acid polypeptide reads, in one-letter code: MEQTLSIIKPDAVAKNVVGKIIDRFESNGLKVAAAKRLQLSRADAEQFYAVHKERPFFKDLVDFMVSGPVVAMVLEGENAVLKNRDLMGATDPKKAAPGTIRADFADSIDANAVHGSDSLENAKIEIAFFFSGREIN.

Residues K9, F57, R85, T91, R102, and N112 each contribute to the ATP site. The active-site Pros-phosphohistidine intermediate is the H115.

Belongs to the NDK family. In terms of assembly, homotetramer. Mg(2+) is required as a cofactor.

The protein localises to the cytoplasm. The catalysed reaction is a 2'-deoxyribonucleoside 5'-diphosphate + ATP = a 2'-deoxyribonucleoside 5'-triphosphate + ADP. It carries out the reaction a ribonucleoside 5'-diphosphate + ATP = a ribonucleoside 5'-triphosphate + ADP. Its function is as follows. Major role in the synthesis of nucleoside triphosphates other than ATP. The ATP gamma phosphate is transferred to the NDP beta phosphate via a ping-pong mechanism, using a phosphorylated active-site intermediate. This Wolinella succinogenes (strain ATCC 29543 / DSM 1740 / CCUG 13145 / JCM 31913 / LMG 7466 / NCTC 11488 / FDC 602W) (Vibrio succinogenes) protein is Nucleoside diphosphate kinase.